We begin with the raw amino-acid sequence, 74 residues long: ATP synthase subunit c (74 aa).

A run of 2 helical transmembrane segments spans residues 9–29 (IAIA…ASIF) and 51–71 (LIGA…AILL).

Belongs to the ATPase C chain family. F-type ATPases have 2 components, F(1) - the catalytic core - and F(0) - the membrane proton channel. F(1) has five subunits: alpha(3), beta(3), gamma(1), delta(1), epsilon(1). F(0) has three main subunits: a(1), b(2) and c(10-14). The alpha and beta chains form an alternating ring which encloses part of the gamma chain. F(1) is attached to F(0) by a central stalk formed by the gamma and epsilon chains, while a peripheral stalk is formed by the delta and b chains.

It localises to the cell inner membrane. F(1)F(0) ATP synthase produces ATP from ADP in the presence of a proton or sodium gradient. F-type ATPases consist of two structural domains, F(1) containing the extramembraneous catalytic core and F(0) containing the membrane proton channel, linked together by a central stalk and a peripheral stalk. During catalysis, ATP synthesis in the catalytic domain of F(1) is coupled via a rotary mechanism of the central stalk subunits to proton translocation. In terms of biological role, key component of the F(0) channel; it plays a direct role in translocation across the membrane. A homomeric c-ring of between 10-14 subunits forms the central stalk rotor element with the F(1) delta and epsilon subunits. This is ATP synthase subunit c from Orientia tsutsugamushi (strain Ikeda) (Rickettsia tsutsugamushi).